We begin with the raw amino-acid sequence, 366 residues long: RISC-loading complex subunit TARBP2 (366 aa).

Sufficient for interaction with PRKRA stretches follow at residues 22–105, 152–234, and 287–366; these read MLAA…EPAL, SPQQ…DARD, and LGAL…AGSK. The DRBM 1 domain maps to 30–97; sequence TPISLLQEYG…AEVALKHLKG (68 aa). Position 152 is a phosphoserine (Ser152). DRBM domains lie at 159–227 and 293–361; these read NPVG…RVHT and ACCR…YLKI. Residues 228 to 366 form a sufficient for interaction with DICER1 region; it reads VPLDARDGNE…QYLKIMAGSK (139 aa).

The protein belongs to the TARBP2 family. Self-associates. Component of the RISC loading complex (RLC), or micro-RNA (miRNA) loading complex (miRLC), which is composed of DICER1, AGO2 and TARBP2. Note that the trimeric RLC/miRLC is also referred to as RISC. Interacts with EIF2AK2/PKR and inhibits its protein kinase activity. Interacts with DHX9 and PRKRA. Interacts with DICER1, AGO2, MOV10, EIF6 and RPL7A (60S ribosome subunit); they form a large RNA-induced silencing complex (RISC). Interacts with IRF7; this interaction prevents IRF7 phosphorylation and activation. As to quaternary structure, (Microbial infection) Interacts with FTSJ3; forms a complex with FTSJ3 and HIV-1 TAR RNA. In terms of assembly, (Microbial infection) Interacts with ebolavirus VP30; this interaction, which occurs only in the presence of siRNA, prevents TARBP2 binding to DICER1 and thus allows the virus to counteract host RNA silencing. (Microbial infection) Interacts with ebolavirus VP35; this interaction prevents TARBP2 binding to DICER1 and thus allows the virus to counteract host RNA silencing.

It localises to the cytoplasm. The protein resides in the perinuclear region. It is found in the nucleus. Required for formation of the RNA induced silencing complex (RISC). Component of the RISC loading complex (RLC), also known as the micro-RNA (miRNA) loading complex (miRLC), which is composed of DICER1, AGO2 and TARBP2. Within the RLC/miRLC, DICER1 and TARBP2 are required to process precursor miRNAs (pre-miRNAs) to mature miRNAs and then load them onto AGO2. AGO2 bound to the mature miRNA constitutes the minimal RISC and may subsequently dissociate from DICER1 and TARBP2. May also play a role in the production of short interfering RNAs (siRNAs) from double-stranded RNA (dsRNA) by DICER1. Binds in vitro to the PRM1 3'-UTR. Seems to act as a repressor of translation. For some pre-miRNA substrates, may also alter the choice of cleavage site by DICER1. Negatively regulates IRF7-mediated IFN-beta signaling triggered by viral infection by inhibiting the phosphorylation of IRF7 and promoting its 'Lys'-48-linked ubiquitination and degradation. Its function is as follows. (Microbial infection) Binds to the HIV-1 TAR RNA which is located in the long terminal repeat (LTR) of HIV-1, and stimulates translation of TAR-containing RNAs. This is achieved in part at least by binding to and inhibiting EIF2AK2/PKR, thereby reducing phosphorylation and inhibition of EIF2S1/eIF-2-alpha. May also promote translation of TAR-containing RNAs independently of EIF2AK2/PKR. Mediates recruitment of FTSJ3 methyltransferase to HIV-1 RNA, leading to 2'-O-methylation of the viral genome, allowing HIV-1 to escape the innate immune system. The protein is RISC-loading complex subunit TARBP2 of Homo sapiens (Human).